The following is a 143-amino-acid chain: MTKAIPKIGSRKKVRIGLRRNARFSLRKSARRITKGIIHVQASFNNTIITVTDPQGRVVFWSSAGTCGFKSSRKASPYAGQRTAVDAIRTVGLQRAEVMVKGAGSGRDAALRAIAKSGVRLSCIRDVTPMPHNGCRPPKKRRL.

This sequence belongs to the universal ribosomal protein uS11 family. Part of the 30S ribosomal subunit.

The protein localises to the plastid. Its subcellular location is the chloroplast. This Zea mays (Maize) protein is Small ribosomal subunit protein uS11c.